Consider the following 280-residue polypeptide: Large ribosomal subunit protein uL2 (280 aa).

Disordered regions lie at residues 33 to 55 (LTEGLTKSGGRNNTGRITSRRRG) and 199 to 266 (DNSN…KASQ). Over residues 209–219 (GRMRHKGKRPS) the composition is skewed to basic residues.

This sequence belongs to the universal ribosomal protein uL2 family. Part of the 50S ribosomal subunit. Forms a bridge to the 30S subunit in the 70S ribosome.

In terms of biological role, one of the primary rRNA binding proteins. Required for association of the 30S and 50S subunits to form the 70S ribosome, for tRNA binding and peptide bond formation. It has been suggested to have peptidyltransferase activity; this is somewhat controversial. Makes several contacts with the 16S rRNA in the 70S ribosome. This chain is Large ribosomal subunit protein uL2, found in Ruegeria sp. (strain TM1040) (Silicibacter sp.).